The following is a 362-amino-acid chain: Putative HLA class I histocompatibility antigen, alpha chain H (362 aa).

The first 24 residues, M1–A24, serve as a signal peptide directing secretion. Positions R25–G114 are alpha-1. At R25 to I308 the chain is on the extracellular side. N110 carries N-linked (GlcNAc...) asparagine glycosylation. Residues G115–A206 are alpha-2. Residues D207–W298 form an alpha-3 region. Positions P209–R297 constitute an Ig-like C1-type domain. Residues C227 and C283 are joined by a disulfide bond. The interval E299–I308 is connecting peptide. A helical membrane pass occupies residues V309–W332. Residues R333–A362 lie on the Cytoplasmic side of the membrane. A disordered region spans residues S337–A362. Over residues G342–S356 the composition is skewed to low complexity.

It belongs to the MHC class I family. In terms of assembly, heterodimer of an alpha chain and a beta chain (beta-2-microglobulin).

It is found in the cell membrane. Involved in the presentation of foreign antigens to the immune system. In Homo sapiens (Human), this protein is Putative HLA class I histocompatibility antigen, alpha chain H (HLA-H).